A 1000-amino-acid chain; its full sequence is C2 domain-containing protein 5 (1000 aa).

The region spanning 1–109 is the C2 domain; sequence MPGKLKVKIV…EAATVISGWF (109 aa). Ca(2+) is bound by residues D19, D26, D76, D78, S81, and D84. Phosphoserine; by PKB/AKT2 is present on S197. A phosphoserine mark is found at S200 and S260. A disordered region spans residues 265–330; it reads MKEIPFNEDP…SGSAGKEGGP (66 aa). Positions 274–289 are enriched in polar residues; the sequence is PNPNTHSSGPSTPLKN. Residues 290 to 318 show a composition bias toward low complexity; the sequence is QTYSFSPSKSYSRQSSSSDTDLSLTPKTG. Residues S293, S295, S304, S305, and S306 each carry the phosphoserine modification. Residue T317 is modified to Phosphothreonine. Positions 319 to 328 are enriched in gly residues; sequence MGSGSAGKEG. Phosphoserine is present on S323. T601 carries the post-translational modification Phosphothreonine. The tract at residues 639–669 is disordered; that stretch reads EIIGSPIPEPRQRSRLLRSQSESSDEVTELD. 5 positions are modified to phosphoserine: S643, S657, S659, S661, and S662. T666 bears the Phosphothreonine mark. S671 carries the phosphoserine modification. Residue T807 is modified to Phosphothreonine. Phosphoserine occurs at positions 817 and 852.

The cofactor is Ca(2+). In terms of processing, phosphorylated on Ser-197 by active myristoylated kinase AKT2; insulin-stimulated phosphorylation by AKT2 regulates SLC2A4/GLUT4 translocation into the plasma membrane.

Its subcellular location is the cytoplasmic vesicle membrane. The protein localises to the cytoplasm. It localises to the cell cortex. It is found in the cell membrane. The protein resides in the cell projection. Its subcellular location is the ruffle. Required for insulin-stimulated glucose transport and glucose transporter SLC2A4/GLUT4 translocation from intracellular glucose storage vesicle (GSV) to the plasma membrane (PM) in adipocytes. Binds phospholipid membranes in a calcium-dependent manner and is necessary for the optimal membrane fusion between SLC2A4/GLUT4 GSV and the PM. The polypeptide is C2 domain-containing protein 5 (C2CD5) (Homo sapiens (Human)).